A 267-amino-acid chain; its full sequence is Eukaryotic translation initiation factor 3 subunit J (267 aa).

2 disordered regions span residues 1–128 and 220–241; these read MAPS…DIDL and KMRE…KTKV. Acidic residues predominate over residues 28 to 46; sequence DEEEEDVLDSWDAAEDSEV. A coiled-coil region spans residues 44–96; sequence SEVEREKAAKAAAAAAKAEAEAAAKKKSKAQRIEEHKQERKKQAEANESDEDS. A compositionally biased stretch (basic and acidic residues) spans 74–88; sequence QRIEEHKQERKKQAE. The span at 90–100 shows a compositional bias: acidic residues; sequence NESDEDSDEDE. Composition is skewed to basic and acidic residues over residues 108-121 and 220-231; these read RRTE…HAQD and KMREERAADKGN.

This sequence belongs to the eIF-3 subunit J family. Component of the eukaryotic translation initiation factor 3 (eIF-3) complex.

The protein resides in the cytoplasm. Functionally, component of the eukaryotic translation initiation factor 3 (eIF-3) complex, which is involved in protein synthesis of a specialized repertoire of mRNAs and, together with other initiation factors, stimulates binding of mRNA and methionyl-tRNAi to the 40S ribosome. The eIF-3 complex specifically targets and initiates translation of a subset of mRNAs involved in cell proliferation. The polypeptide is Eukaryotic translation initiation factor 3 subunit J (hcr1) (Neosartorya fischeri (strain ATCC 1020 / DSM 3700 / CBS 544.65 / FGSC A1164 / JCM 1740 / NRRL 181 / WB 181) (Aspergillus fischerianus)).